A 336-amino-acid polypeptide reads, in one-letter code: MKIVFWGTPKYAAENLKTIAKAGYEVIAVVTQPDRKRGRGKKLSPSPVKEAAEELSIPVYATNSISKDQKTKEILLNLKADVYLVVAFGQILPKEILDQPKLGCWNSHASLLPVWRGAAPIQWSIINADAKTGICIMSMEEGLDTGPVIEQESTVIKDSDNLEILTNRLSVMSSKLLLKSLEKIKLTKGLNKSSRLKQLNAIEQRNLNGIPSYARQITKEDNLIDWNQDARKILKKIQGLYPNAYTLYNGKRIKILDAIISCDNNQSKESQDIKNQSKSNRIPGEIFMINKQIGIKIMTNDFPVLIKYAQLEGKKATDSYTLSIQSNLSINDKLGI.

110 to 113 (SLLP) lines the (6S)-5,6,7,8-tetrahydrofolate pocket.

It belongs to the Fmt family.

The catalysed reaction is L-methionyl-tRNA(fMet) + (6R)-10-formyltetrahydrofolate = N-formyl-L-methionyl-tRNA(fMet) + (6S)-5,6,7,8-tetrahydrofolate + H(+). Functionally, attaches a formyl group to the free amino group of methionyl-tRNA(fMet). The formyl group appears to play a dual role in the initiator identity of N-formylmethionyl-tRNA by promoting its recognition by IF2 and preventing the misappropriation of this tRNA by the elongation apparatus. This is Methionyl-tRNA formyltransferase from Prochlorococcus marinus (strain NATL2A).